Here is a 298-residue protein sequence, read N- to C-terminus: 2-dehydro-3-deoxy-D-arabinonate dehydratase (298 aa).

I86 serves as a coordination point for substrate. 3 residues coordinate Mg(2+): E148, E150, and D169. Substrate-binding residues include K187 and T261.

This sequence belongs to the FAH family. As to quaternary structure, homotetramer. Mg(2+) serves as cofactor. The cofactor is Ca(2+).

The catalysed reaction is 2-dehydro-3-deoxy-D-arabinonate = 2,5-dioxopentanoate + H2O. Functionally, participates in a pentose oxidation pathway that converts D-arabinonate to 2-oxoglutarate. The polypeptide is 2-dehydro-3-deoxy-D-arabinonate dehydratase (Saccharolobus solfataricus (strain ATCC 35092 / DSM 1617 / JCM 11322 / P2) (Sulfolobus solfataricus)).